We begin with the raw amino-acid sequence, 154 residues long: RING finger protein 11 (154 aa).

Residues 1–12 (MGNCLKSPTSDD) show a composition bias toward polar residues. The interval 1-52 (MGNCLKSPTSDDISLLHESQSDRASFGEGTEPDQEPPPPYQEQVPVPIYHPT) is disordered. G2 carries N-myristoyl glycine lipidation. C4 is lipidated: S-palmitoyl cysteine. S14 and S25 each carry phosphoserine. Residues 37 to 40 (PPPY) carry the PPxY motif motif. The RING-type zinc-finger motif lies at 99-140 (CVICMMDFVYGDPIRFLPCMHIYHLDCIDDWLMRSFTCPSCM). T135 is modified (phosphothreonine; by PKB/AKT1).

Interacts (when phosphorylated) with 14-3-3. Interacts with the E3 ubiquitin-ligases NEDD4, ITCH, SMURF2 and WWP1. Also interacts with the E2 ubiquitin-conjugating enzymes UBE2D1 and UBE2N, but neither with CDC34, nor with UBE2L3. Interacts with ZNF350, EPS15 and STAMBP. After TNF stimulation, interacts with TAX1BP1, TNFAIP3 and RIPK1; these interactions are transient and they are lost after 1 hour of stimulation with TNF. Interacts with GGA1. In terms of processing, ubiquitinated in the presence of ITCH, SMURF2 and UBE2D1, as well as WWP1. Post-translationally, phosphorylation by PKB/AKT1 may accelerate degradation by the proteasome. Acylation at both Gly-2 and Cys-4 is required for proper localization to the endosomes.

The protein localises to the early endosome. It is found in the recycling endosome. The protein resides in the cytoplasm. It localises to the nucleus. Essential component of a ubiquitin-editing protein complex, comprising also TNFAIP3, ITCH and TAX1BP1, that ensures the transient nature of inflammatory signaling pathways. Promotes the association of TNFAIP3 to RIPK1 after TNF stimulation. TNFAIP3 deubiquitinates 'Lys-63' polyubiquitin chains on RIPK1 and catalyzes the formation of 'Lys-48'-polyubiquitin chains. This leads to RIPK1 proteasomal degradation and consequently termination of the TNF- or LPS-mediated activation of NF-kappa-B. Recruits STAMBP to the E3 ubiquitin-ligase SMURF2 for ubiquitination, leading to its degradation by the 26S proteasome. The sequence is that of RING finger protein 11 (Rnf11) from Mus musculus (Mouse).